Reading from the N-terminus, the 498-residue chain is Glycerol kinase (498 aa).

Threonine 12 is a binding site for ADP. Positions 12, 13, and 14 each coordinate ATP. A sn-glycerol 3-phosphate-binding site is contributed by threonine 12. Residue arginine 16 coordinates ADP. The sn-glycerol 3-phosphate site is built by arginine 82, glutamate 83, tyrosine 134, and aspartate 243. Residues arginine 82, glutamate 83, tyrosine 134, aspartate 243, and glutamine 244 each contribute to the glycerol site. 2 residues coordinate ADP: threonine 265 and glycine 308. Positions 265, 308, 312, and 411 each coordinate ATP. Position 411 (glycine 411) interacts with ADP.

It belongs to the FGGY kinase family.

It carries out the reaction glycerol + ATP = sn-glycerol 3-phosphate + ADP + H(+). The protein operates within polyol metabolism; glycerol degradation via glycerol kinase pathway; sn-glycerol 3-phosphate from glycerol: step 1/1. Its activity is regulated as follows. Inhibited by fructose 1,6-bisphosphate (FBP). In terms of biological role, key enzyme in the regulation of glycerol uptake and metabolism. Catalyzes the phosphorylation of glycerol to yield sn-glycerol 3-phosphate. The protein is Glycerol kinase of Brucella canis (strain ATCC 23365 / NCTC 10854 / RM-666).